Consider the following 85-residue polypeptide: Large ribosomal subunit protein bL27 (85 aa).

The disordered stretch occupies residues 1–20 (MAHKKAGGSTRNGRDSESKR).

The protein belongs to the bacterial ribosomal protein bL27 family.

The protein is Large ribosomal subunit protein bL27 of Azotobacter vinelandii (strain DJ / ATCC BAA-1303).